The following is a 368-amino-acid chain: Biotin synthase (368 aa).

The Radical SAM core domain occupies 74–309 (CCGNVVDLCS…QQILRYAGGR (236 aa)). Cysteine 92, cysteine 96, and cysteine 99 together coordinate [4Fe-4S] cluster. [2Fe-2S] cluster-binding residues include cysteine 137, cysteine 174, cysteine 234, and arginine 304.

Belongs to the radical SAM superfamily. Biotin synthase family. As to quaternary structure, homodimer. Requires [4Fe-4S] cluster as cofactor. It depends on [2Fe-2S] cluster as a cofactor.

It catalyses the reaction (4R,5S)-dethiobiotin + (sulfur carrier)-SH + 2 reduced [2Fe-2S]-[ferredoxin] + 2 S-adenosyl-L-methionine = (sulfur carrier)-H + biotin + 2 5'-deoxyadenosine + 2 L-methionine + 2 oxidized [2Fe-2S]-[ferredoxin]. It participates in cofactor biosynthesis; biotin biosynthesis; biotin from 7,8-diaminononanoate: step 2/2. Its function is as follows. Catalyzes the conversion of dethiobiotin (DTB) to biotin by the insertion of a sulfur atom into dethiobiotin via a radical-based mechanism. In Rippkaea orientalis (strain PCC 8801 / RF-1) (Cyanothece sp. (strain PCC 8801)), this protein is Biotin synthase.